We begin with the raw amino-acid sequence, 117 residues long: Immunoglobulin heavy variable 1-2 (117 aa).

The N-terminal stretch at 1–19 (MDWTWRILFLVAAATGAHS) is a signal peptide. Gln20 carries the pyrrolidone carboxylic acid modification. The interval 20–44 (QVQLVQSGAEVKKPGASVKVSCKAS) is framework-1. Residues 20–117 (QVQLVQSGAE…DDTAVYYCAR (98 aa)) form the Ig-like domain. The cysteines at positions 41 and 115 are disulfide-linked. Residues 45–52 (GYTFTGYY) form a complementarity-determining-1 region. Residues 53-69 (MHWVRQAPGQGLEWMGW) are framework-2. The segment at 70–77 (INPNSGGT) is complementarity-determining-2. Residues 78 to 115 (NYAQKFQGWVTMTRDTSISTAYMELSRLRSDDTAVYYC) form a framework-3 region. The segment at 116–117 (AR) is complementarity-determining-3.

Immunoglobulins are composed of two identical heavy chains and two identical light chains; disulfide-linked.

It is found in the secreted. It localises to the cell membrane. In terms of biological role, v region of the variable domain of immunoglobulin heavy chains that participates in the antigen recognition. Immunoglobulins, also known as antibodies, are membrane-bound or secreted glycoproteins produced by B lymphocytes. In the recognition phase of humoral immunity, the membrane-bound immunoglobulins serve as receptors which, upon binding of a specific antigen, trigger the clonal expansion and differentiation of B lymphocytes into immunoglobulins-secreting plasma cells. Secreted immunoglobulins mediate the effector phase of humoral immunity, which results in the elimination of bound antigens. The antigen binding site is formed by the variable domain of one heavy chain, together with that of its associated light chain. Thus, each immunoglobulin has two antigen binding sites with remarkable affinity for a particular antigen. The variable domains are assembled by a process called V-(D)-J rearrangement and can then be subjected to somatic hypermutations which, after exposure to antigen and selection, allow affinity maturation for a particular antigen. This Homo sapiens (Human) protein is Immunoglobulin heavy variable 1-2.